A 349-amino-acid chain; its full sequence is MSLLPPLTIRLCSPRGFCAGVDRAIQIVILALKKYGAPVYVRHEIVHNRYVVEGLQQRGAVFVEELDEIPEKHRGQPVVFSAHGVPKSVSEKASLYNLFYLDATCPLVSKVHKQAIRHQRHGRHVILIGHSGHPEVIGTMGQLEKGAVTLIETVEDALYYQPENPNKLGFVTQTTLSVEDTAGILDVLQKRFPALESPATESICYATTNRQEAVKAAALGSDLFLIVGSSNSSNARRLVEVAERFGARQSILVQRADDIDFDRLGTLSVISLSAGASAPEIIVDEIITAFRKRYNVKIELAETAVETQQFLVNRELRDVILTPQDMAFVSGGVKTGRNDDTQMLKIEEK.

C18 contributes to the [4Fe-4S] cluster binding site. (2E)-4-hydroxy-3-methylbut-2-enyl diphosphate-binding residues include H47 and H83. Positions 47 and 83 each coordinate dimethylallyl diphosphate. Isopentenyl diphosphate contacts are provided by H47 and H83. Residue C105 coordinates [4Fe-4S] cluster. (2E)-4-hydroxy-3-methylbut-2-enyl diphosphate is bound at residue H133. H133 contributes to the dimethylallyl diphosphate binding site. H133 contributes to the isopentenyl diphosphate binding site. The active-site Proton donor is the E135. (2E)-4-hydroxy-3-methylbut-2-enyl diphosphate is bound at residue T174. Residue C204 participates in [4Fe-4S] cluster binding. (2E)-4-hydroxy-3-methylbut-2-enyl diphosphate-binding residues include S232, S233, N234, and S277. Dimethylallyl diphosphate-binding residues include S232, S233, N234, and S277. Isopentenyl diphosphate is bound by residues S232, S233, N234, and S277.

This sequence belongs to the IspH family. Requires [4Fe-4S] cluster as cofactor.

It carries out the reaction isopentenyl diphosphate + 2 oxidized [2Fe-2S]-[ferredoxin] + H2O = (2E)-4-hydroxy-3-methylbut-2-enyl diphosphate + 2 reduced [2Fe-2S]-[ferredoxin] + 2 H(+). The catalysed reaction is dimethylallyl diphosphate + 2 oxidized [2Fe-2S]-[ferredoxin] + H2O = (2E)-4-hydroxy-3-methylbut-2-enyl diphosphate + 2 reduced [2Fe-2S]-[ferredoxin] + 2 H(+). It functions in the pathway isoprenoid biosynthesis; dimethylallyl diphosphate biosynthesis; dimethylallyl diphosphate from (2E)-4-hydroxy-3-methylbutenyl diphosphate: step 1/1. The protein operates within isoprenoid biosynthesis; isopentenyl diphosphate biosynthesis via DXP pathway; isopentenyl diphosphate from 1-deoxy-D-xylulose 5-phosphate: step 6/6. Catalyzes the conversion of 1-hydroxy-2-methyl-2-(E)-butenyl 4-diphosphate (HMBPP) into a mixture of isopentenyl diphosphate (IPP) and dimethylallyl diphosphate (DMAPP). Acts in the terminal step of the DOXP/MEP pathway for isoprenoid precursor biosynthesis. The protein is 4-hydroxy-3-methylbut-2-enyl diphosphate reductase of Bartonella bacilliformis (strain ATCC 35685 / KC583 / Herrer 020/F12,63).